Here is a 345-residue protein sequence, read N- to C-terminus: Phosphoribosylformylglycinamidine cyclo-ligase (345 aa).

It belongs to the AIR synthase family.

It localises to the cytoplasm. It catalyses the reaction 2-formamido-N(1)-(5-O-phospho-beta-D-ribosyl)acetamidine + ATP = 5-amino-1-(5-phospho-beta-D-ribosyl)imidazole + ADP + phosphate + H(+). Its pathway is purine metabolism; IMP biosynthesis via de novo pathway; 5-amino-1-(5-phospho-D-ribosyl)imidazole from N(2)-formyl-N(1)-(5-phospho-D-ribosyl)glycinamide: step 2/2. In Shewanella baltica (strain OS223), this protein is Phosphoribosylformylglycinamidine cyclo-ligase.